Here is a 91-residue protein sequence, read N- to C-terminus: Cell division topological specificity factor (91 aa).

It belongs to the MinE family.

Its function is as follows. Prevents the cell division inhibition by proteins MinC and MinD at internal division sites while permitting inhibition at polar sites. This ensures cell division at the proper site by restricting the formation of a division septum at the midpoint of the long axis of the cell. This chain is Cell division topological specificity factor, found in Bradyrhizobium sp. (strain BTAi1 / ATCC BAA-1182).